Reading from the N-terminus, the 1222-residue chain is MLFNINEKGEPLVISFAPFLSPEAIKHLQENERCRDQSQKRTAQQIEAIYTSGQNILVSASAGSGKTFVMVERILDKILRGVSIDRLFISTFTVKAATELRERIENKLYSQIAQTTDFQMKVYLTEQLQSLCQADIGTMDAFAQKVVSRYGYSIGISSQFRIMQDKAEQDVLKQEVFSKLFNEFMNQKEAPVFRALVKNFSGNCKDTSAFRELVYTCYSFSQSTENPKIWLQENFLSAAKTYQRLEDIPDHDIELLLLAMQDTANQLRDVTDMEDYGQLTKAGSRSAKYTKHLTIIEKLSDWVRDFKCLYGKAGLDRLIRDVTGLIPSGNDVTVSKVKYPVFKTLHQKLKQFRHLETILMYQKDCFSLLEQLQDFVLAFSEAYLAVKIQESAFEFSDIAHFAIKILEENTDIRQSYQQHYHEVMVDEYQDNNHMQERLLTLLSNGHNRFMVGDIKQSIYRFRQADPQIFNQKFRDYQKKPEQGKVILLKENFRSQSEVLNVSNAVFSHLMDESVGDVLYDEQHQLIAGSHAQTVPYLDRRAQLLLYNSDKDDGNAPSDSEGISFSEVTIVAKEIIKLHNDKGVPFEDITLLVSSRTRNDIISHTFNQYGIPIATDGGQQNYLKSVEVMVMLDTLRTINNPRNDYALVALLRSPMFAFDEDDLARIALQKDNELDKDCLYDKIQRAVIGRGAHPELIHDTLLGKLNVFLKTLKSWRRYAKLGSLYDLIWKIFNDRFYFDFVASQAKAEQAQANLYALALRANQFEKSGYKGLYRFIKMIDKVLETQNDLADVEVATPKQAVNLMTIHKSKGLQFPYVFILNCDKRFSMTDIHKSFILNRQHGIGIKYLADIKGLLGETTLNSVKVSMETLPYQLNKQELRLATLSEEMRLLYVAMTRAEKKVYFIGKASKSKSQEITDPKKLGKLLPLALREQLLTFQDWLLAIADIFSTEDLYFDVRFIEDSDLTQESVGRLQTPQLLNPDDLKDNRQSETIARALDMLEAVSQLNANYEAAIHLPTVRTPSQLKATYEPLLEPIGVDIIEKSSRSLSDFTLPHFSKKAKVEASHIGSALHQLMQVLPLSKPINQQTLLDALRGIDSNEEVKTALDLKKIESFFCDTSLGQFFQTYQKHLYREAPFAILKLDPISQEEYVLRGIIDAYFLFDDHIVLVDYKTDKYKQPIELKKRYQQQLELYAEALTQTYKLPVTKRYLVLMGGGKPEIVEV.

A UvrD-like helicase ATP-binding domain is found at 27 to 483 (HLQENERCRD…RDYQKKPEQG (457 aa)). Residue 48–55 (AIYTSGQN) participates in ATP binding. One can recognise a UvrD-like helicase C-terminal domain in the interval 512–798 (ESVGDVLYDE…ADVEVATPKQ (287 aa)).

This sequence belongs to the helicase family. AddA subfamily. As to quaternary structure, heterodimer of AddA and AddB/RexB. Mg(2+) serves as cofactor.

The catalysed reaction is Couples ATP hydrolysis with the unwinding of duplex DNA by translocating in the 3'-5' direction.. The enzyme catalyses ATP + H2O = ADP + phosphate + H(+). Functionally, the heterodimer acts as both an ATP-dependent DNA helicase and an ATP-dependent, dual-direction single-stranded exonuclease. Recognizes the chi site generating a DNA molecule suitable for the initiation of homologous recombination. The AddA nuclease domain is required for chi fragment generation; this subunit has the helicase and 3' -&gt; 5' nuclease activities. This Streptococcus pyogenes serotype M1 protein is ATP-dependent helicase/nuclease subunit A.